The sequence spans 213 residues: Orotate phosphoribosyltransferase (213 aa).

Residue Lys-26 participates in 5-phospho-alpha-D-ribose 1-diphosphate binding. Residue 34–35 (FF) coordinates orotate. 5-phospho-alpha-D-ribose 1-diphosphate-binding positions include 72–73 (YK), Arg-99, Lys-100, Lys-103, His-105, and 124–132 (DDVITAGTA). Residues Thr-128 and Arg-156 each coordinate orotate.

The protein belongs to the purine/pyrimidine phosphoribosyltransferase family. PyrE subfamily. As to quaternary structure, homodimer. It depends on Mg(2+) as a cofactor.

It carries out the reaction orotidine 5'-phosphate + diphosphate = orotate + 5-phospho-alpha-D-ribose 1-diphosphate. It functions in the pathway pyrimidine metabolism; UMP biosynthesis via de novo pathway; UMP from orotate: step 1/2. Its function is as follows. Catalyzes the transfer of a ribosyl phosphate group from 5-phosphoribose 1-diphosphate to orotate, leading to the formation of orotidine monophosphate (OMP). The sequence is that of Orotate phosphoribosyltransferase from Haemophilus ducreyi (strain 35000HP / ATCC 700724).